We begin with the raw amino-acid sequence, 267 residues long: NAD kinase 2 (267 aa).

D52 serves as the catalytic Proton acceptor. NAD(+) is bound by residues 52–53 (DG), 124–125 (NE), R151, D153, 164–169 (TGYNKS), and A188.

The protein belongs to the NAD kinase family. Requires a divalent metal cation as cofactor.

It is found in the cytoplasm. It carries out the reaction NAD(+) + ATP = ADP + NADP(+) + H(+). In terms of biological role, involved in the regulation of the intracellular balance of NAD and NADP, and is a key enzyme in the biosynthesis of NADP. Catalyzes specifically the phosphorylation on 2'-hydroxyl of the adenosine moiety of NAD to yield NADP. This is NAD kinase 2 from Geobacillus kaustophilus (strain HTA426).